Here is a 101-residue protein sequence, read N- to C-terminus: NAD(P)H-quinone oxidoreductase subunit 4L, chloroplastic (101 aa).

The next 2 helical transmembrane spans lie at M2–I22 and I61–V81.

It belongs to the complex I subunit 4L family. NDH is composed of at least 16 different subunits, 5 of which are encoded in the nucleus.

It is found in the plastid. Its subcellular location is the chloroplast thylakoid membrane. It catalyses the reaction a plastoquinone + NADH + (n+1) H(+)(in) = a plastoquinol + NAD(+) + n H(+)(out). It carries out the reaction a plastoquinone + NADPH + (n+1) H(+)(in) = a plastoquinol + NADP(+) + n H(+)(out). In terms of biological role, NDH shuttles electrons from NAD(P)H:plastoquinone, via FMN and iron-sulfur (Fe-S) centers, to quinones in the photosynthetic chain and possibly in a chloroplast respiratory chain. The immediate electron acceptor for the enzyme in this species is believed to be plastoquinone. Couples the redox reaction to proton translocation, and thus conserves the redox energy in a proton gradient. This chain is NAD(P)H-quinone oxidoreductase subunit 4L, chloroplastic, found in Dioscorea elephantipes (Elephant's foot yam).